Here is a 1320-residue protein sequence, read N- to C-terminus: MRAAVGLMLSHGAGGMEPALSRPDYEQSALHHSCLLVLLRGVGPSRARVLQRAFEKVRRVNHIRVNDSSGHPRSIWIRFVHDHPVEHNDWGDFQTHRRLLGLVTIGKFDSQIELNELCRQHESLKVRYGSTLYESRAIFFGPDEQPLETIGEVLGPPAAGGRRLQDEFTTPSNFKAQAFFYREQDSCADLESRIGDFASALFWVLESRRLERSREKADKVSLLLAPFEKRDFVGLDMESRNNRKRCVGRVMKNLADLSLQAGLVDDALSLYHNANETLRSVGDSLWVGATEEGLCAASAMLLYPQMRETETLHRNSSLQEAGTSPLKNTPEKWRASDATKKISASDATANNVDSNQPQQRVTSNSSSCSSVSSLVTTATNSSASDTPTTSSSSTSTISAAPIPGHQRNGDLPGNILKAEEISNYYRKAIINYSKYRHAATIETEAALKASRICIEQNRPLDVAMFLQNILYINLSMSEAERVKRFEVITDLYQQIGYQRKAAFFQRLAALKHVQQGSQAPDWNQSYRLMLGSFTGYRLCLDPLEVIENAAGWPALQIDLVQTLITAARRLGHSALATRHMTFLLQTQWDNMSPTEQSEMAVQLQNLSAQCEGSPVPLVLENGTVIPPANLTDLPYCIDLQVKDLPAHLRPQRIKVAKADSGPFLFTPIHFNSVDRRDKKKDKNKIAFQWVQNDLSEVTVRLRNPLPFELPVTDMRLLTNGVVFESLPQTLVLQPHVPTYVALHGTPIETGQLDLQGYSTHTLGVKSNCRLKHMRGRSFPPNYVVDVIPALPRISVKTSLPQTATFSNMNSADIVVTSASLTLYNGESSSCTITITNESATLPLEHLEFSINSNVEQELQQKIFRIDEEAIKAHLPVPPQGTIEIIVDVFAEADFVCPQPPASLHSAAAPGDYGASSLTHYSSVSTSGHASLPSRVGSPHHRRNEPQNSSFRSTISGGPPSLAALTLHPGGGGGVGPSSLGSQYNQHIEAQVRFKYSGGDALTAGYCRQCAVSFNLELLPSVQITSWDVLPAEVASQFYLVLDISNLTAQEMSLNYTDTKNILIEAKESCRVPIPVDRCSLEKVVAARAAEVAENLERELCFRTQLLSFNDALSKLCSIHIAERVKIKWLLTGTDIQGIASLRGIVLSQSMVDLTAVSPLEWAISFQDTLVQPHNEIVCTVGQRSLLSIQLANQSLQPLRNLVLSIKFYQDYLNGMENYNLETRVAISGPNRIAIPLLEKQEQKEHTCSVIFFTPGRFKASIECTSNPQKQSEQPSSLLTRSCPAEAESVGQSVMFSSSYDEQQAHVWKFIPPIEVTVVEQ.

Residues 313-411 (HRNSSLQEAG…IPGHQRNGDL (99 aa)) are disordered. Residues 314 to 327 (RNSSLQEAGTSPLK) are compositionally biased toward polar residues. The residue at position 317 (Ser-317) is a Phosphoserine. Phosphothreonine is present on Thr-329. The span at 329-340 (TPEKWRASDATK) shows a compositional bias: basic and acidic residues. Positions 345–361 (SDATANNVDSNQPQQRV) are enriched in polar residues. The segment covering 362 to 400 (TSNSSSCSSVSSLVTTATNSSASDTPTTSSSSTSTISAA) has biased composition (low complexity). Ser-672 carries the phosphoserine modification. The tract at residues 923–954 (VSTSGHASLPSRVGSPHHRRNEPQNSSFRSTI) is disordered. The span at 945–954 (PQNSSFRSTI) shows a compositional bias: polar residues.

The protein belongs to the NIBP family. As to quaternary structure, may be part of the multisubunit TRAPP (transport protein particle) complex.

The protein resides in the cytoplasm. It localises to the golgi apparatus. Functionally, cooperates with Rab11 and fwd/PI4K to mediate the flow of membrane through the Golgi, which is required to support cleavage furrow ingression, therefore promoting cytokinesis in male meiotic cells. This chain is Protein brunelleschi, found in Drosophila melanogaster (Fruit fly).